The sequence spans 824 residues: DNA replication helicase (824 aa).

90–97 (GTAGAGKT) contacts ATP.

The protein belongs to the herpesviridae helicase family. As to quaternary structure, associates with the primase and the primase-associated factor to form the helicase-primase complex.

It localises to the host nucleus. In terms of biological role, component of the helicase/primase complex. Unwinds the DNA at the replication forks and generates single-stranded DNA for both leading and lagging strand synthesis. The primase synthesizes short RNA primers on the lagging strand that the polymerase elongates using dNTPs. Possesses helicase-like motifs and therefore may act as the helicase subunit of the complex. The protein is DNA replication helicase of Human herpesvirus 6B (strain Z29) (HHV-6 variant B).